The following is a 301-amino-acid chain: Probable alpha-L-glutamate ligase (301 aa).

The ATP-grasp domain occupies Leu-104–Glu-287. ATP contacts are provided by residues Lys-141, Glu-178–Tyr-179, Asp-187, and Arg-211–Asn-213. The Mg(2+) site is built by Asp-248, Glu-260, and Asn-262. 3 residues coordinate Mn(2+): Asp-248, Glu-260, and Asn-262.

The protein belongs to the RimK family. Mg(2+) is required as a cofactor. Mn(2+) serves as cofactor.

This chain is Probable alpha-L-glutamate ligase, found in Pseudomonas putida (strain ATCC 700007 / DSM 6899 / JCM 31910 / BCRC 17059 / LMG 24140 / F1).